A 160-amino-acid chain; its full sequence is RNA pyrophosphohydrolase (160 aa).

One can recognise a Nudix hydrolase domain in the interval 10–154 (PYRPCVGVML…KRDVYVAVLD (145 aa)). A Nudix box motif is present at residues 44 to 65 (GGVEKGEDPRAAALRELWEETG).

The protein belongs to the Nudix hydrolase family. RppH subfamily. A divalent metal cation serves as cofactor.

Accelerates the degradation of transcripts by removing pyrophosphate from the 5'-end of triphosphorylated RNA, leading to a more labile monophosphorylated state that can stimulate subsequent ribonuclease cleavage. In Roseobacter denitrificans (strain ATCC 33942 / OCh 114) (Erythrobacter sp. (strain OCh 114)), this protein is RNA pyrophosphohydrolase.